The sequence spans 930 residues: A disintegrin and metalloproteinase with thrombospondin motifs 5 (930 aa).

Positions 1 to 16 (MLLGWASLLLCAFRLP) are cleaved as a signal peptide. Residues 17-261 (LAAVGPAATP…PQTWWRRRRR (245 aa)) constitute a propeptide that is removed on maturation. 2 disordered regions span residues 24-69 (ATPA…QRRR) and 206-231 (RASCETPASTPEAHEHAPAHSNPSGR). The span at 31–42 (AGQPPTAAAAAQ) shows a compositional bias: low complexity. Residues 46–59 (RQGEEVQERAEPPG) are compositionally biased toward basic and acidic residues. The Cysteine switch signature appears at 207 to 214 (ASCETPAS). Cysteine 209 contacts Zn(2+). The region spanning 267–476 (RQVELLLVAD…GHGNCLLDLP (210 aa)) is the Peptidase M12B domain. 8 cysteine pairs are disulfide-bonded: cysteine 342/cysteine 394, cysteine 371/cysteine 376, cysteine 388/cysteine 471, cysteine 426/cysteine 455, cysteine 497/cysteine 519, cysteine 508/cysteine 529, cysteine 514/cysteine 548, and cysteine 542/cysteine 553. Histidine 410 provides a ligand contact to Zn(2+). Glutamate 411 is a catalytic residue. Positions 414 and 420 each coordinate Zn(2+). The Disintegrin domain maps to 485 to 566 (ELPGQTYDAT…TKKKYYSTSS (82 aa)). The N-linked (GlcNAc...) asparagine glycan is linked to asparagine 498. In terms of domain architecture, TSP type-1 1 spans 567 to 622 (HGNWGSWGSWGQCSRSCGGGVQFAYRHCNNPAPRNNGRYCTGKRAIYRSCSLMPCP). Residues tryptophan 570 and tryptophan 573 are each glycosylated (C-linked (Man) tryptophan). 3 disulfides stabilise this stretch: cysteine 579–cysteine 616, cysteine 583–cysteine 621, and cysteine 594–cysteine 606. O-linked (Fuc...) serine glycosylation occurs at serine 582. N-linked (GlcNAc...) asparagine glycans are attached at residues asparagine 728, asparagine 802, and asparagine 807. The segment at 732 to 874 (TKIVGTFNKK…HGSNKVGSHT (143 aa)) is spacer. Residues 875 to 929 (SQPQWVTGPWLACSRTCDTGWHTRTVQCQDGNRKLAKGCPLSQRPSAFKQCLLKK) enclose the TSP type-1 2 domain.

Zn(2+) is required as a cofactor. The precursor is cleaved by furin and PCSK7 outside of the cell. Post-translationally, glycosylated. Can be O-fucosylated by POFUT2 on a serine or a threonine residue found within the consensus sequence C1-X(2)-(S/T)-C2-G of the TSP type-1 repeat domains where C1 and C2 are the first and second cysteine residue of the repeat, respectively. Fucosylated repeats can then be further glycosylated by the addition of a beta-1,3-glucose residue by the glucosyltransferase, B3GALTL. Fucosylation mediates the efficient secretion of ADAMTS family members. Can also be C-glycosylated with one or two mannose molecules on tryptophan residues within the consensus sequence W-X-X-W of the TPRs, and N-glycosylated. These other glycosylations can also facilitate secretion. Expressed at low level in placenta primarily but also detected in heart and brain, cervix, uterus, bladder, esophagus, rib cartilage, chondroblastoma, fibrous tissue and a joint capsule from an arthritic patient.

It localises to the secreted. The protein localises to the extracellular space. Its subcellular location is the extracellular matrix. Its function is as follows. Metalloproteinase that plays an important role in connective tissue organization, development, inflammation and cell migration. Extracellular matrix (ECM) degrading enzyme that show proteolytic activity toward the hyalectan group of chondroitin sulfate proteoglycans (CSPGs) including ACAN, VCAN, BCAN and NCAN. Cleavage within the hyalectans occurs at Glu-Xaa recognition motifs. Plays a role in embryonic development, including limb and cardiac morphogenesis, and skeletal muscle development through its VCAN remodeling properties. Cleaves VCAN in the pericellular matrix surrounding myoblasts, facilitating myoblast contact and fusion which is required for skeletal muscle development and regeneration. Participates in development of brown adipose tissue and browning of white adipose tissue. Plays an important role for T-lymphocyte migration from draining lymph nodes following viral infection. The chain is A disintegrin and metalloproteinase with thrombospondin motifs 5 (ADAMTS5) from Homo sapiens (Human).